Here is a 590-residue protein sequence, read N- to C-terminus: Arginine--tRNA ligase (590 aa).

The 'HIGH' region motif lies at 126–136 (PNVAKEMHVGH).

This sequence belongs to the class-I aminoacyl-tRNA synthetase family. In terms of assembly, monomer.

Its subcellular location is the cytoplasm. It carries out the reaction tRNA(Arg) + L-arginine + ATP = L-arginyl-tRNA(Arg) + AMP + diphosphate. The sequence is that of Arginine--tRNA ligase from Streptomyces avermitilis (strain ATCC 31267 / DSM 46492 / JCM 5070 / NBRC 14893 / NCIMB 12804 / NRRL 8165 / MA-4680).